The following is a 360-amino-acid chain: MRVFNFSAGPAALPEEVLRQAADEMLDWHGSGMSVMEMSHRGKEFMSIHEAALADLRELLDVPASHRILFLQGGGIAENAIVPMNLLGSRQTADFVVTGSWSQKSFNEAKKYGTPHLAASGKTADGFTRAPARAEWQLSDDPAYVHLCTNETIDGVETFEIPDLGDIPLVADVSSHILSRPMDVAKYGVLFGGAQKNIGMAGVTVVIVREDLLDRALSICPSAFEWKTVAANNSLYNTPPTYAIYIAGLVFQWLKRQGGLEAIEARNIEKAKLLYDTIDASGFYLNKVEPAVRSRMNVPFFLADETRNEDFLAGAKARGLLQLKGHKSVGGMRASIYNAVPLEGVKALVEYMKDFEQRGA.

Arg41 lines the L-glutamate pocket. The pyridoxal 5'-phosphate site is built by Trp101, Thr152, Asp172, and Gln195. Lys196 is modified (N6-(pyridoxal phosphate)lysine). Pyridoxal 5'-phosphate is bound at residue 237–238 (NT).

This sequence belongs to the class-V pyridoxal-phosphate-dependent aminotransferase family. SerC subfamily. As to quaternary structure, homodimer. Pyridoxal 5'-phosphate is required as a cofactor.

It localises to the cytoplasm. It catalyses the reaction O-phospho-L-serine + 2-oxoglutarate = 3-phosphooxypyruvate + L-glutamate. It carries out the reaction 4-(phosphooxy)-L-threonine + 2-oxoglutarate = (R)-3-hydroxy-2-oxo-4-phosphooxybutanoate + L-glutamate. Its pathway is amino-acid biosynthesis; L-serine biosynthesis; L-serine from 3-phospho-D-glycerate: step 2/3. The protein operates within cofactor biosynthesis; pyridoxine 5'-phosphate biosynthesis; pyridoxine 5'-phosphate from D-erythrose 4-phosphate: step 3/5. In terms of biological role, catalyzes the reversible conversion of 3-phosphohydroxypyruvate to phosphoserine and of 3-hydroxy-2-oxo-4-phosphonooxybutanoate to phosphohydroxythreonine. The chain is Phosphoserine aminotransferase from Burkholderia ambifaria (strain ATCC BAA-244 / DSM 16087 / CCUG 44356 / LMG 19182 / AMMD) (Burkholderia cepacia (strain AMMD)).